A 238-amino-acid polypeptide reads, in one-letter code: Ribonuclease 3 (238 aa).

The RNase III domain maps to 17-140; the sequence is YATLEKALGY…LMAGVYLEAG (124 aa). E53 contributes to the Mg(2+) binding site. D57 is a catalytic residue. Residues S126 and E129 each coordinate Mg(2+). The active site involves E129. Residues 167-236 form the DRBM domain; it reads DYKTALQELT…AYQALQKLKE (70 aa).

This sequence belongs to the ribonuclease III family. Homodimer. Mg(2+) serves as cofactor.

Its subcellular location is the cytoplasm. The enzyme catalyses Endonucleolytic cleavage to 5'-phosphomonoester.. Functionally, digests double-stranded RNA. Involved in the processing of primary rRNA transcript to yield the immediate precursors to the large and small rRNAs (23S and 16S). Processes some mRNAs, and tRNAs when they are encoded in the rRNA operon. Processes pre-crRNA and tracrRNA of type II CRISPR loci if present in the organism. The chain is Ribonuclease 3 from Helicobacter pylori (strain Shi470).